The following is a 1822-amino-acid chain: Sperm flagellar protein 2 (1822 aa).

In terms of domain architecture, Calponin-homology (CH) spans 1–105; it reads MSEILCQWLN…LLYQLYIALQ (105 aa). 4 coiled-coil regions span residues 227 to 260, 321 to 396, 732 to 758, and 871 to 909; these read KALE…KDLQ, AHEA…KQAK, NQAQ…KAQK, and CEKV…LAEL. Disordered stretches follow at residues 896–1004, 1278–1327, 1664–1718, and 1803–1822; these read KEAE…VPQP, EEEK…EATP, SIPS…NNEK, and EHVQ…EEKK. The segment covering 911–920 has biased composition (pro residues); the sequence is LPTPPPAPPP. 2 stretches are compositionally biased toward basic and acidic residues: residues 921–930 and 949–968; these read EPEKEKEIHQ and PHGK…ETAL. Over residues 975-987 the composition is skewed to low complexity; that stretch reads KGKSSGGKVPVKK. Basic and acidic residues-rich tracts occupy residues 1278 to 1292 and 1303 to 1314; these read EEEK…KEKS and KEPPKKKQEDKK. The segment at 1324 to 1676 is interaction with IFT20; that stretch reads EATPVIVTTE…SAEKTSSTDA (353 aa). Positions 1686–1712 form a coiled coil; the sequence is EENAAREERKLKDDTEKREQKDEEIPE. A compositionally biased stretch (basic and acidic residues) spans 1688 to 1708; the sequence is NAAREERKLKDDTEKREQKDE.

As to quaternary structure, interacts (via C-terminus) with IFT20. Interacts with DYNC1I2.

The protein resides in the cell projection. Its subcellular location is the cilium. It localises to the flagellum. The protein localises to the cytoplasm. It is found in the golgi apparatus. Required for correct axoneme development in spermatozoa. Important for normal development of the manchette and sperm head morphology. Essential for male fertility. Plays a role in localization of the intraflagellar transport protein IFT20 to the manchette, suggesting function as an adapter for dynein-mediated protein transport during spermatogenesis. Also plays a role in bone growth where it seems to be required for normal osteoblast differentiation. This chain is Sperm flagellar protein 2 (SPEF2), found in Homo sapiens (Human).